A 377-amino-acid polypeptide reads, in one-letter code: Hydrogenase maturation factor HypD (377 aa).

Cys41, Cys69, and Cys72 together coordinate Fe cation.

Belongs to the HypD family. The cofactor is [4Fe-4S] cluster.

Its pathway is protein modification; [NiFe] hydrogenase maturation. Its function is as follows. Involved in the maturation of [NiFe] hydrogenases. Involved in the biosynthesis of the Fe(CN)(2)CO cofactor. This is Hydrogenase maturation factor HypD from Rhodobacter capsulatus (Rhodopseudomonas capsulata).